The sequence spans 198 residues: Ribonuclease HII (198 aa).

Positions 11-198 constitute an RNase H type-2 domain; the sequence is TCIAGVDEVG…APVKRALGLA (188 aa). The a divalent metal cation site is built by aspartate 17, glutamate 18, and aspartate 109.

It belongs to the RNase HII family. Mn(2+) serves as cofactor. Mg(2+) is required as a cofactor.

It is found in the cytoplasm. It catalyses the reaction Endonucleolytic cleavage to 5'-phosphomonoester.. Functionally, endonuclease that specifically degrades the RNA of RNA-DNA hybrids. In Pectobacterium carotovorum subsp. carotovorum (strain PC1), this protein is Ribonuclease HII.